We begin with the raw amino-acid sequence, 737 residues long: MQARKKYVLLGLCTCCWILLYYWAGLQERLLGLITHRRGEVPRPWPDWLDRALLPNFAEQLDLQNGGGPGDSPRQRKQAWSSIYKDSRCRMDTCFDFGRCQTQSGFRVYIYPPEKGERVSEGYRKILTSVSESRYYTSDPREACLFVLGIDTLDRDQLSQQFVPNVDERIRGYPLWNDGRNHVIFNLYSGTWPNYTEDLGFNVGQAILAKASLNTEHFRPGFDISIPLFSKEHPQKGGKRGWLVRNSVPPRRKYLLMFKGKRYLTGIGSDTRNALHHIHNGKDIVSLTTCRHGKDWEKHKDARCDHDNQEYERFDYQELLHNSTFCLVPRGRRLGSFRFLESLQAACIPVLLSNGWELPFSDVIQWNQAVVEGDERLLLQVPSTVRAVGIDRVLALRQQTQTLWDAYFSSVDKIVLTTLEIIKDRVYSHISRNKLMWNALPGGLLVLPEFSTHLAHYPFYYLHLGISPGLEFTAVIHATSPLVSQSQPIMKLLQVVSKSKYCSQIIILWNSEKSPPQRSKWPPMPVPLTVTDGRRKTSSRFLPHAAIETEAVLSLDEDTVLLTSEINFAFHVWRSFPDRIVGYPPRSHFWDPVKKAWGYTSKWTNEYSIILTGAAFYHRYYHHLFSHYLPSSLRALVDHSCNCEDILMNFLVSSVAHLPPVKVAQRKQYKEMPSLQGTKMAPWANPEHFTQRQECVNTFSSWFGYMPLEHSQFRLDPVLFKDHVSVLRKRYKDLERV.

The Cytoplasmic portion of the chain corresponds to 1 to 6 (MQARKK). The helical; Signal-anchor for type II membrane protein transmembrane segment at 7-27 (YVLLGLCTCCWILLYYWAGLQ) threads the bilayer. Residues 28–737 (ERLLGLITHR…RKRYKDLERV (710 aa)) are Lumenal-facing. 2 N-linked (GlcNAc...) asparagine glycosylation sites follow: asparagine 194 and asparagine 322. Residues arginine 432, arginine 540, aspartate 556, glutamate 557, aspartate 558, glutamate 644, aspartate 645, and arginine 692 each contribute to the UDP-N-acetyl-alpha-D-glucosamine site. Residue aspartate 558 coordinates Mn(2+). A disulfide bond links cysteine 643 and cysteine 695. Residue aspartate 645 is part of the active site.

This sequence belongs to the glycosyltransferase 47 family. It depends on Mn(2+) as a cofactor.

It localises to the endoplasmic reticulum membrane. The enzyme catalyses 3-O-{[(1-&gt;4)-beta-D-GlcA-(1-&gt;4)-alpha-D-GlcNAc](n)-(1-&gt;4)-beta-D-GlcA-(1-&gt;3)-beta-D-Gal-(1-&gt;3)-beta-D-Gal-(1-&gt;4)-beta-D-Xyl}-L-seryl-[protein] + UDP-N-acetyl-alpha-D-glucosamine = 3-O-{alpha-D-GlcNAc-[(1-&gt;4)-beta-D-GlcA-(1-&gt;4)-alpha-D-GlcNAc](n)-(1-&gt;4)-beta-D-GlcA-(1-&gt;3)-beta-D-Gal-(1-&gt;3)-beta-D-Gal-(1-&gt;4)-beta-D-Xyl}-L-seryl-[protein] + UDP + H(+). The catalysed reaction is 3-O-{alpha-D-GlcNAc-[(1-&gt;4)-beta-D-GlcA-(1-&gt;4)-alpha-D-GlcNAc](n)-(1-&gt;4)-beta-D-GlcA-(1-&gt;3)-beta-D-Gal-(1-&gt;3)-beta-D-Gal-(1-&gt;4)-beta-D-Xyl}-L-seryl-[protein] + UDP-alpha-D-glucuronate = 3-O-{[(1-&gt;4)-beta-D-GlcA-(1-&gt;4)-alpha-D-GlcNAc](n+1)-(1-&gt;4)-beta-D-GlcA-(1-&gt;3)-beta-D-Gal-(1-&gt;3)-beta-D-Gal-(1-&gt;4)-beta-D-Xyl}-L-seryl-[protein] + UDP + H(+). Its pathway is protein modification; protein glycosylation. Functionally, glycosyltransferase required for the biosynthesis of heparan-sulfate. The sequence is that of Exostosin-1c (ext1c) from Danio rerio (Zebrafish).